The chain runs to 187 residues: Elongation factor P (187 aa).

This sequence belongs to the elongation factor P family.

The protein localises to the cytoplasm. It participates in protein biosynthesis; polypeptide chain elongation. In terms of biological role, involved in peptide bond synthesis. Stimulates efficient translation and peptide-bond synthesis on native or reconstituted 70S ribosomes in vitro. Probably functions indirectly by altering the affinity of the ribosome for aminoacyl-tRNA, thus increasing their reactivity as acceptors for peptidyl transferase. In Corynebacterium kroppenstedtii (strain DSM 44385 / JCM 11950 / CIP 105744 / CCUG 35717), this protein is Elongation factor P.